The primary structure comprises 276 residues: Undecaprenyl-diphosphatase (276 aa).

A run of 7 helical transmembrane segments spans residues 12–34 (LGIV…IVVG), 43–63 (TATA…MWEF), 85–105 (FNLL…ADLI), 108–128 (WLFN…IMLW), 185–205 (TEFS…YSLF), 218–238 (IFAI…RALL), and 249–269 (FAWY…LHLI).

Belongs to the UppP family.

Its subcellular location is the cell inner membrane. The enzyme catalyses di-trans,octa-cis-undecaprenyl diphosphate + H2O = di-trans,octa-cis-undecaprenyl phosphate + phosphate + H(+). Functionally, catalyzes the dephosphorylation of undecaprenyl diphosphate (UPP). Confers resistance to bacitracin. The sequence is that of Undecaprenyl-diphosphatase from Ectopseudomonas mendocina (strain ymp) (Pseudomonas mendocina).